A 600-amino-acid polypeptide reads, in one-letter code: Aspartate--tRNA(Asp/Asn) ligase (600 aa).

Glu-174 contacts L-aspartate. An aspartate region spans residues 198 to 201 (QLFK). Arg-220 is a binding site for L-aspartate. ATP contacts are provided by residues 220 to 222 (RDE) and Gln-229. L-aspartate is bound at residue His-457. ATP is bound at residue Glu-491. Position 498 (Arg-498) interacts with L-aspartate. Residue 543-546 (GLDR) participates in ATP binding.

It belongs to the class-II aminoacyl-tRNA synthetase family. Type 1 subfamily. In terms of assembly, homodimer.

Its subcellular location is the cytoplasm. The enzyme catalyses tRNA(Asx) + L-aspartate + ATP = L-aspartyl-tRNA(Asx) + AMP + diphosphate. Aspartyl-tRNA synthetase with relaxed tRNA specificity since it is able to aspartylate not only its cognate tRNA(Asp) but also tRNA(Asn). Reaction proceeds in two steps: L-aspartate is first activated by ATP to form Asp-AMP and then transferred to the acceptor end of tRNA(Asp/Asn). The protein is Aspartate--tRNA(Asp/Asn) ligase of Burkholderia orbicola (strain AU 1054).